We begin with the raw amino-acid sequence, 119 residues long: gSG7 salivary protein (119 aa).

2 cysteine pairs are disulfide-bonded: Cys58/Cys113 and Cys81/Cys91.

The protein localises to the secreted. With respect to regulation, the activity is increased in the presence of host properdin (CFP). Functionally, salivary protein that inhibits the alternative pathway of complement system activation in the host while having no inhibitory effect on the classical pathway. Inhibits activity of activated host C3-convertase complex C3bBb (C3-CFB). Enhances accumulation of C3bBb on immobilized properdin. This chain is gSG7 salivary protein, found in Anopheles freeborni (Western malaria mosquito).